The primary structure comprises 593 residues: Aspartate--tRNA ligase (593 aa).

Glu180 lines the L-aspartate pocket. The tract at residues 204–207 (QIFK) is aspartate. Arg226 contacts L-aspartate. Residues 226–228 (RDE) and Gln235 contribute to the ATP site. His453 is an L-aspartate binding site. Glu487 is an ATP binding site. Arg494 serves as a coordination point for L-aspartate. 539 to 542 (GLDR) serves as a coordination point for ATP.

It belongs to the class-II aminoacyl-tRNA synthetase family. Type 1 subfamily. As to quaternary structure, homodimer.

Its subcellular location is the cytoplasm. The catalysed reaction is tRNA(Asp) + L-aspartate + ATP = L-aspartyl-tRNA(Asp) + AMP + diphosphate. Its function is as follows. Catalyzes the attachment of L-aspartate to tRNA(Asp) in a two-step reaction: L-aspartate is first activated by ATP to form Asp-AMP and then transferred to the acceptor end of tRNA(Asp). The sequence is that of Aspartate--tRNA ligase from Clostridium botulinum (strain Kyoto / Type A2).